Consider the following 198-residue polypeptide: dITP/XTP pyrophosphatase (198 aa).

8 to 13 serves as a coordination point for substrate; sequence TKNKGK. Residue Asp-69 is the Proton acceptor of the active site. Asp-69 provides a ligand contact to Mg(2+). Substrate is bound by residues Ser-70, 152–155, Lys-175, and 180–181; these read FGYD and HR.

Belongs to the HAM1 NTPase family. Homodimer. It depends on Mg(2+) as a cofactor.

The catalysed reaction is XTP + H2O = XMP + diphosphate + H(+). The enzyme catalyses dITP + H2O = dIMP + diphosphate + H(+). It carries out the reaction ITP + H2O = IMP + diphosphate + H(+). Its function is as follows. Pyrophosphatase that catalyzes the hydrolysis of nucleoside triphosphates to their monophosphate derivatives, with a high preference for the non-canonical purine nucleotides XTP (xanthosine triphosphate), dITP (deoxyinosine triphosphate) and ITP. Seems to function as a house-cleaning enzyme that removes non-canonical purine nucleotides from the nucleotide pool, thus preventing their incorporation into DNA/RNA and avoiding chromosomal lesions. The polypeptide is dITP/XTP pyrophosphatase (Shouchella clausii (strain KSM-K16) (Alkalihalobacillus clausii)).